The sequence spans 132 residues: MARKEFRYRGYTLEQLMNMSLEELAKLLPARQRRSLKRGLTPEQKKLLRKIRLAKKGKYNKPIRTHCRDMIVLPEMVGLTIYVHNGKEFVPVEIKPEMIGHYLGEFAPTRKRVQHGAPGIGATRSSMFVAVK.

Belongs to the universal ribosomal protein uS19 family.

Its function is as follows. Protein S19 forms a complex with S13 that binds strongly to the 16S ribosomal RNA. The polypeptide is Small ribosomal subunit protein uS19 (rps19) (Pyrococcus abyssi (strain GE5 / Orsay)).